The primary structure comprises 117 residues: Large ribosomal subunit protein bL20 (117 aa).

This sequence belongs to the bacterial ribosomal protein bL20 family.

Its function is as follows. Binds directly to 23S ribosomal RNA and is necessary for the in vitro assembly process of the 50S ribosomal subunit. It is not involved in the protein synthesizing functions of that subunit. This Mannheimia succiniciproducens (strain KCTC 0769BP / MBEL55E) protein is Large ribosomal subunit protein bL20.